A 399-amino-acid polypeptide reads, in one-letter code: Bifunctional enzyme IspD/IspF (399 aa).

Residues 1 to 239 are 2-C-methyl-D-erythritol 4-phosphate cytidylyltransferase; sequence MHTWALLLAA…SSEKKNMQVP (239 aa). The interval 240–399 is 2-C-methyl-D-erythritol 2,4-cyclodiphosphate synthase; sequence CVGWGYDVHR…AVTALRRVSS (160 aa). A divalent metal cation-binding residues include aspartate 246 and histidine 248. 4-CDP-2-C-methyl-D-erythritol 2-phosphate contacts are provided by residues 246 to 248 and 273 to 274; these read DVH and HS. Histidine 281 contributes to the a divalent metal cation binding site. Residues 295–297, 300–304, 371–374, and phenylalanine 378 contribute to the 4-CDP-2-C-methyl-D-erythritol 2-phosphate site; these read DIG, FPDTD, and TTEE.

This sequence in the N-terminal section; belongs to the IspD/TarI cytidylyltransferase family. IspD subfamily. It in the C-terminal section; belongs to the IspF family. A divalent metal cation serves as cofactor.

It carries out the reaction 2-C-methyl-D-erythritol 4-phosphate + CTP + H(+) = 4-CDP-2-C-methyl-D-erythritol + diphosphate. It catalyses the reaction 4-CDP-2-C-methyl-D-erythritol 2-phosphate = 2-C-methyl-D-erythritol 2,4-cyclic diphosphate + CMP. It participates in isoprenoid biosynthesis; isopentenyl diphosphate biosynthesis via DXP pathway; isopentenyl diphosphate from 1-deoxy-D-xylulose 5-phosphate: step 2/6. It functions in the pathway isoprenoid biosynthesis; isopentenyl diphosphate biosynthesis via DXP pathway; isopentenyl diphosphate from 1-deoxy-D-xylulose 5-phosphate: step 4/6. Bifunctional enzyme that catalyzes the formation of 4-diphosphocytidyl-2-C-methyl-D-erythritol from CTP and 2-C-methyl-D-erythritol 4-phosphate (MEP) (IspD), and catalyzes the conversion of 4-diphosphocytidyl-2-C-methyl-D-erythritol 2-phosphate (CDP-ME2P) to 2-C-methyl-D-erythritol 2,4-cyclodiphosphate (ME-CPP) with a corresponding release of cytidine 5-monophosphate (CMP) (IspF). This Oleidesulfovibrio alaskensis (strain ATCC BAA-1058 / DSM 17464 / G20) (Desulfovibrio alaskensis) protein is Bifunctional enzyme IspD/IspF.